The following is a 344-amino-acid chain: 5-formaminoimidazole-4-carboxamide-1-(beta)-D-ribofuranosyl 5'-monophosphate synthetase (344 aa).

5-amino-1-(5-phospho-beta-D-ribosyl)imidazole-4-carboxamide-binding residues include histidine 31 and serine 96. One can recognise an ATP-grasp domain in the interval 130–324; it reads MELLQRAGVP…YFDRPMDMGE (195 aa). Residues 153-198 and glutamate 220 each bind ATP; that span reads PVIV…VPAY. 5-amino-1-(5-phospho-beta-D-ribosyl)imidazole-4-carboxamide is bound at residue asparagine 240. Residues glutamate 279 and glutamate 292 each coordinate Mg(2+).

It belongs to the phosphohexose mutase family. It depends on Mg(2+) as a cofactor. Requires Mn(2+) as cofactor.

The catalysed reaction is 5-amino-1-(5-phospho-beta-D-ribosyl)imidazole-4-carboxamide + formate + ATP = 5-formamido-1-(5-phospho-D-ribosyl)imidazole-4-carboxamide + ADP + phosphate. Its pathway is purine metabolism; IMP biosynthesis via de novo pathway; 5-formamido-1-(5-phospho-D-ribosyl)imidazole-4-carboxamide from 5-amino-1-(5-phospho-D-ribosyl)imidazole-4-carboxamide (formate route): step 1/1. Catalyzes the ATP- and formate-dependent formylation of 5-aminoimidazole-4-carboxamide-1-beta-d-ribofuranosyl 5'-monophosphate (AICAR) to 5-formaminoimidazole-4-carboxamide-1-beta-d-ribofuranosyl 5'-monophosphate (FAICAR) in the absence of folates. The sequence is that of 5-formaminoimidazole-4-carboxamide-1-(beta)-D-ribofuranosyl 5'-monophosphate synthetase from Pyrobaculum neutrophilum (strain DSM 2338 / JCM 9278 / NBRC 100436 / V24Sta) (Thermoproteus neutrophilus).